Reading from the N-terminus, the 773-residue chain is Molybdenum cofactor sulfurase (773 aa).

Lys243 bears the N6-(pyridoxal phosphate)lysine mark. Cys410 is an active-site residue. The 142-residue stretch at 632–773 (LRLLRQSGQR…LSCGDTVLVE (142 aa)) folds into the MOSC domain. Ser731 carries the phosphoserine modification.

Belongs to the class-V pyridoxal-phosphate-dependent aminotransferase family. MOCOS subfamily. Requires pyridoxal 5'-phosphate as cofactor.

The catalysed reaction is Mo-molybdopterin + L-cysteine + AH2 = thio-Mo-molybdopterin + L-alanine + A + H2O. It functions in the pathway cofactor biosynthesis; molybdopterin biosynthesis. In terms of biological role, sulfurates the molybdenum cofactor. Sulfation of molybdenum is essential for xanthine dehydrogenase (XDH) and aldehyde oxidase (ADO) enzymes in which molybdenum cofactor is liganded by 1 oxygen and 1 sulfur atom in active form. The polypeptide is Molybdenum cofactor sulfurase (Drosophila ananassae (Fruit fly)).